The chain runs to 90 residues: Co-chaperonin GroES (90 aa).

It belongs to the GroES chaperonin family. In terms of assembly, heptamer of 7 subunits arranged in a ring. Interacts with the chaperonin GroEL.

The protein localises to the cytoplasm. Functionally, together with the chaperonin GroEL, plays an essential role in assisting protein folding. The GroEL-GroES system forms a nano-cage that allows encapsulation of the non-native substrate proteins and provides a physical environment optimized to promote and accelerate protein folding. GroES binds to the apical surface of the GroEL ring, thereby capping the opening of the GroEL channel. The polypeptide is Co-chaperonin GroES (Borreliella burgdorferi (strain ATCC 35210 / DSM 4680 / CIP 102532 / B31) (Borrelia burgdorferi)).